The chain runs to 477 residues: Argininosuccinate lyase (477 aa).

It belongs to the lyase 1 family. Argininosuccinate lyase subfamily.

Its subcellular location is the cytoplasm. The enzyme catalyses 2-(N(omega)-L-arginino)succinate = fumarate + L-arginine. The protein operates within amino-acid biosynthesis; L-arginine biosynthesis; L-arginine from L-ornithine and carbamoyl phosphate: step 3/3. This Streptomyces avermitilis (strain ATCC 31267 / DSM 46492 / JCM 5070 / NBRC 14893 / NCIMB 12804 / NRRL 8165 / MA-4680) protein is Argininosuccinate lyase.